Consider the following 111-residue polypeptide: uncharacterized protein (111 aa).

Positions 1–18 (MGKSMEEGIFVKVFPSKA) are cleaved as a signal peptide.

This is an uncharacterized protein from Acidianus convivator (ATV).